The sequence spans 66 residues: Large ribosomal subunit protein bL35 (66 aa).

This sequence belongs to the bacterial ribosomal protein bL35 family.

This is Large ribosomal subunit protein bL35 from Ruegeria sp. (strain TM1040) (Silicibacter sp.).